A 121-amino-acid polypeptide reads, in one-letter code: Large ribosomal subunit protein uL14 (121 aa).

Belongs to the universal ribosomal protein uL14 family. As to quaternary structure, part of the 50S ribosomal subunit. Forms a cluster with proteins L3 and L19. In the 70S ribosome, L14 and L19 interact and together make contacts with the 16S rRNA in bridges B5 and B8.

Its function is as follows. Binds to 23S rRNA. Forms part of two intersubunit bridges in the 70S ribosome. This chain is Large ribosomal subunit protein uL14, found in Prochlorococcus marinus (strain MIT 9515).